A 313-amino-acid chain; its full sequence is Small ribosomal subunit protein uS2 (313 aa).

A compositionally biased stretch (basic and acidic residues) spans 233–256; it reads RTMTDKQSDVAKEAKADGKEEAPK. The disordered stretch occupies residues 233–293; the sequence is RTMTDKQSDV…SRKLVAAGTA (61 aa).

It belongs to the universal ribosomal protein uS2 family.

In Bdellovibrio bacteriovorus (strain ATCC 15356 / DSM 50701 / NCIMB 9529 / HD100), this protein is Small ribosomal subunit protein uS2.